The following is a 190-amino-acid chain: Elongation factor P 2 (190 aa).

It belongs to the elongation factor P family.

The protein localises to the cytoplasm. It functions in the pathway protein biosynthesis; polypeptide chain elongation. Involved in peptide bond synthesis. Stimulates efficient translation and peptide-bond synthesis on native or reconstituted 70S ribosomes in vitro. Probably functions indirectly by altering the affinity of the ribosome for aminoacyl-tRNA, thus increasing their reactivity as acceptors for peptidyl transferase. This chain is Elongation factor P 2 (efp2), found in Chlamydia muridarum (strain MoPn / Nigg).